The following is a 237-amino-acid chain: Uridylate kinase (237 aa).

Residue 9–12 (KLSG) coordinates ATP. Glycine 51 lines the UMP pocket. Positions 52 and 56 each coordinate ATP. UMP contacts are provided by residues aspartate 71 and 132 to 139 (CGNPFFTT). The ATP site is built by threonine 159, tyrosine 165, and aspartate 168.

This sequence belongs to the UMP kinase family. Homohexamer.

It is found in the cytoplasm. The enzyme catalyses UMP + ATP = UDP + ADP. Its pathway is pyrimidine metabolism; CTP biosynthesis via de novo pathway; UDP from UMP (UMPK route): step 1/1. With respect to regulation, inhibited by UTP. In terms of biological role, catalyzes the reversible phosphorylation of UMP to UDP. The chain is Uridylate kinase from Prochlorococcus marinus (strain MIT 9313).